Here is a 317-residue protein sequence, read N- to C-terminus: Methionyl-tRNA formyltransferase (317 aa).

110–113 (SLLP) contacts (6S)-5,6,7,8-tetrahydrofolate. The interval 292 to 317 (RMKGEDFVRGKNVQPGDVLGEANEEN) is disordered.

This sequence belongs to the Fmt family.

The catalysed reaction is L-methionyl-tRNA(fMet) + (6R)-10-formyltetrahydrofolate = N-formyl-L-methionyl-tRNA(fMet) + (6S)-5,6,7,8-tetrahydrofolate + H(+). In terms of biological role, attaches a formyl group to the free amino group of methionyl-tRNA(fMet). The formyl group appears to play a dual role in the initiator identity of N-formylmethionyl-tRNA by promoting its recognition by IF2 and preventing the misappropriation of this tRNA by the elongation apparatus. This Bacillus velezensis (strain DSM 23117 / BGSC 10A6 / LMG 26770 / FZB42) (Bacillus amyloliquefaciens subsp. plantarum) protein is Methionyl-tRNA formyltransferase.